A 107-amino-acid polypeptide reads, in one-letter code: 2Fe-2S ferredoxin CtmE (107 aa).

One can recognise a 2Fe-2S ferredoxin-type domain in the interval 3-106; the sequence is VKVTYVDSAN…GLVIHTLEPE (104 aa). [2Fe-2S] cluster contacts are provided by Cys41, Cys47, Cys50, and Cys87.

This sequence belongs to the adrenodoxin/putidaredoxin family. [2Fe-2S] cluster serves as cofactor.

It participates in terpene metabolism; monoterpene degradation. In terms of biological role, involved in the degradation of the cyclic monoterpene limonene. Probably part of an electron transfer system involved in the oxidation of limonene to perillyl alcohol. The protein is 2Fe-2S ferredoxin CtmE of Castellaniella defragrans (strain DSM 12143 / CCUG 39792 / 65Phen) (Alcaligenes defragrans).